A 391-amino-acid chain; its full sequence is B2 bradykinin receptor (391 aa).

Topologically, residues 1–60 (MFSPWKISMFLSVREDSVPTTASFSADMLNVTLQGPTLNGTFAQSKCPQVEWLGWLNTIQ) are extracellular. 2 N-linked (GlcNAc...) asparagine glycosylation sites follow: N30 and N39. A helical transmembrane segment spans residues 61-84 (PPFLWVLFVLATLENIFVLSVFCL). At 85-93 (HKSSCTVAE) the chain is on the cytoplasmic side. Residues 94 to 118 (IYLGNLAAADLILACGLPFWAITIS) traverse the membrane as a helical segment. The Extracellular portion of the chain corresponds to 119–131 (NNFDWLFGETLCR). C130 and C211 are disulfide-bonded. The helical transmembrane segment at 132-153 (VVNAIISMNLYSSICFLMLVSI) threads the bilayer. Residues 154-175 (DRYLALVKTMSMGRMRGVRWAK) lie on the Cytoplasmic side of the membrane. A Phosphotyrosine modification is found at Y156. The helical transmembrane segment at 176-198 (LYSLVIWGCTLLLSSPMLVFRTM) threads the bilayer. The Extracellular segment spans residues 199-221 (KEYSDEGHNVTACVISYPSLIWE). The N-linked (GlcNAc...) asparagine glycan is linked to N207. The helical transmembrane segment at 222 to 248 (VFTNMLLNVVGFLLPLSVITFCTMQIM) threads the bilayer. Topologically, residues 249–267 (QVLRNNEMQKFKEIQTERR) are cytoplasmic. A helical transmembrane segment spans residues 268–292 (ATVLVLVVLLLFIICWLPFQISTFL). Residues 293–311 (DTLHRLGILSSCQDERIID) lie on the Extracellular side of the membrane. The chain crosses the membrane as a helical span at residues 312-335 (VITQIASFMAYSNSCLNPLVYVIV). Residues 336–391 (GKRFRKKSWEVYQGVCQKGGCRSEPIQMENSMGTLRTSISVERQIHKLQDWAGSRQ) are Cytoplasmic-facing. Y347 is subject to Phosphotyrosine. The S-palmitoyl cysteine moiety is linked to residue C351. S366 bears the Phosphoserine mark. Position 369 is a phosphothreonine (T369). S373 and S375 each carry phosphoserine; by GRK6.

It belongs to the G-protein coupled receptor 1 family. Bradykinin receptor subfamily. BDKRB2 sub-subfamily. Forms a complex with PECAM1 and GNAQ. Interacts with PECAM1. Ubiquitous. Widespread in normal smooth muscle tissue and neurons.

The protein resides in the cell membrane. In terms of biological role, receptor for bradykinin. It is associated with G proteins that activate a phosphatidylinositol-calcium second messenger system. In Homo sapiens (Human), this protein is B2 bradykinin receptor (BDKRB2).